Consider the following 702-residue polypeptide: Sodium/hydrogen exchanger 6 (702 aa).

12 consecutive transmembrane segments (helical) span residues Ser72–Phe92, Gly104–Pro124, Val177–Gly197, Ile212–Tyr232, Cys253–His273, Val279–Leu299, Ile325–Val345, Thr373–Ile393, Phe415–Phe435, Phe437–Gly457, Asn480–Ile500, and Leu516–Cys536.

The protein belongs to the monovalent cation:proton antiporter 1 (CPA1) transporter (TC 2.A.36) family. In terms of assembly, homodimer. Interacts with RACK1; regulates the distribution of SLC9A6 between endosomes and the plasma membrane. Post-translationally, ubiquitinated (in vitro). Glycosylated.

The protein resides in the endosome membrane. The protein localises to the recycling endosome membrane. It localises to the early endosome membrane. Its subcellular location is the late endosome membrane. It is found in the cell membrane. The catalysed reaction is Na(+)(in) + H(+)(out) = Na(+)(out) + H(+)(in). The enzyme catalyses K(+)(in) + H(+)(out) = K(+)(out) + H(+)(in). Its function is as follows. Endosomal Na(+), K(+)/H(+) antiporter. Mediates the electroneutral exchange of endosomal luminal H(+) for a cytosolic Na(+) or K(+). By facilitating proton efflux, SLC9A6 counteracts the acidity generated by vacuolar (V)-ATPase, thereby limiting luminal acidification. Responsible for alkalizing and maintaining the endosomal pH, and consequently in, e.g., endosome maturation and trafficking of recycling endosomal cargo. Plays a critical role during neurodevelopment by regulating synaptic development and plasticity. Implicated in the maintenance of cell polarity in a manner that is dependent on its ability to modulate intravesicular pH. Regulates intracelular pH in some specialized cells, osteoclasts and stereocilia where this transporter localizes to the plasma membrane. The protein is Sodium/hydrogen exchanger 6 (Slc9a6) of Mus musculus (Mouse).